Consider the following 149-residue polypeptide: Protein RhiC (149 aa).

The N-terminal stretch at 1-23 is a signal peptide; sequence MTATLRAFGWLAAFALTVTFAQG.

It localises to the periplasm. Its function is as follows. May be involved in plant-microbe interaction. The polypeptide is Protein RhiC (rhiC) (Rhizobium leguminosarum bv. viciae).